The chain runs to 237 residues: H/ACA ribonucleoprotein complex subunit 1 (237 aa).

Composition is skewed to gly residues over residues M1–G59 and R172–W237. Disordered regions lie at residues M1–G64 and K157–W237. 2 RGG-box regions span residues G4–G56 and K166–R236.

The protein belongs to the GAR1 family. As to quaternary structure, component of the box H/ACA small nucleolar ribonucleoprotein (H/ACA snoRNP) complex consisting of Nop60B, Gar1, NPH2 and Nop10, and associated with H/ACA-type snoRNAs.

Its subcellular location is the nucleus. It is found in the nucleolus. Functionally, component of the box H/ACA small nucleolar ribonucleoprotein (H/ACA snoRNP) complex, which catalyzes pseudouridylation of rRNA. This involves the isomerization of uridine such that the ribose is subsequently attached to C5, instead of the normal N1. Pseudouridine ('psi') residues may serve to stabilize the conformation of rRNAs. Required for ribosome biogenesis. H/ACA snoRNP complex-dependent ribosome biogenesis is important in female germline cell differentiation during oogenesis. This Drosophila melanogaster (Fruit fly) protein is H/ACA ribonucleoprotein complex subunit 1.